The chain runs to 342 residues: Ribosomal RNA small subunit methyltransferase C (342 aa).

The protein belongs to the methyltransferase superfamily. RsmC family. In terms of assembly, monomer.

The protein resides in the cytoplasm. It carries out the reaction guanosine(1207) in 16S rRNA + S-adenosyl-L-methionine = N(2)-methylguanosine(1207) in 16S rRNA + S-adenosyl-L-homocysteine + H(+). Specifically methylates the guanine in position 1207 of 16S rRNA in the 30S particle. The polypeptide is Ribosomal RNA small subunit methyltransferase C (Salmonella paratyphi A (strain ATCC 9150 / SARB42)).